A 176-amino-acid chain; its full sequence is Endoribonuclease YbeY (176 aa).

Positions 138, 142, and 148 each coordinate Zn(2+).

It belongs to the endoribonuclease YbeY family. The cofactor is Zn(2+).

Its subcellular location is the cytoplasm. Functionally, single strand-specific metallo-endoribonuclease involved in late-stage 70S ribosome quality control and in maturation of the 3' terminus of the 16S rRNA. The chain is Endoribonuclease YbeY from Trichormus variabilis (strain ATCC 29413 / PCC 7937) (Anabaena variabilis).